The chain runs to 33 residues: Beta-amanitin proprotein (33 aa).

Positions 1 to 10 are excised as a propeptide; that stretch reads MSDINATRLP. Positions 11-18 form a cross-link, cyclopeptide (Ile-Pro); it reads IWGIGCDP. Residues 12–16 constitute a cross-link (2'-cysteinyl-6'-hydroxytryptophan sulfoxide (Trp-Cys)); it reads WGIGC. The propeptide occupies 19–33; sequence CVGDEVTALLTRGEA.

Belongs to the MSDIN fungal toxin family. In terms of processing, processed by the macrocyclase-peptidase enzyme POPB to yield a toxic cyclic decapeptide. POPB first removes 10 residues from the N-terminus. Conformational trapping of the remaining peptide forces the enzyme to release this intermediate rather than proceed to macrocyclization. The enzyme rebinds the remaining peptide in a different conformation and catalyzes macrocyclization of the N-terminal 8 residues.

Toxin belonging to the bicyclic octapeptides amatoxins that acts by binding non-competitively to RNA polymerase II and greatly slowing the elongation of transcripts from target promoters. The sequence is that of Beta-amanitin proprotein from Amanita fuligineoides.